The following is a 563-amino-acid chain: Arginine--tRNA ligase (563 aa).

The 'HIGH' region motif lies at 121 to 131; sequence PNIAKPFSIGH.

The protein belongs to the class-I aminoacyl-tRNA synthetase family. As to quaternary structure, monomer.

It localises to the cytoplasm. The catalysed reaction is tRNA(Arg) + L-arginine + ATP = L-arginyl-tRNA(Arg) + AMP + diphosphate. This is Arginine--tRNA ligase from Streptococcus pneumoniae (strain CGSP14).